Consider the following 471-residue polypeptide: UDP-N-acetylmuramate--L-alanine ligase (471 aa).

112–118 (GTHGKTT) contributes to the ATP binding site.

It belongs to the MurCDEF family.

It is found in the cytoplasm. The catalysed reaction is UDP-N-acetyl-alpha-D-muramate + L-alanine + ATP = UDP-N-acetyl-alpha-D-muramoyl-L-alanine + ADP + phosphate + H(+). Its pathway is cell wall biogenesis; peptidoglycan biosynthesis. Functionally, cell wall formation. The polypeptide is UDP-N-acetylmuramate--L-alanine ligase (Cupriavidus metallidurans (strain ATCC 43123 / DSM 2839 / NBRC 102507 / CH34) (Ralstonia metallidurans)).